The chain runs to 73 residues: Large ribosomal subunit protein bL31 (73 aa).

Belongs to the bacterial ribosomal protein bL31 family. Type A subfamily. As to quaternary structure, part of the 50S ribosomal subunit.

Its function is as follows. Binds the 23S rRNA. The sequence is that of Large ribosomal subunit protein bL31 from Agrobacterium fabrum (strain C58 / ATCC 33970) (Agrobacterium tumefaciens (strain C58)).